A 271-amino-acid chain; its full sequence is Urease accessory protein UreD (271 aa).

Belongs to the UreD family. In terms of assembly, ureD, UreF and UreG form a complex that acts as a GTP-hydrolysis-dependent molecular chaperone, activating the urease apoprotein by helping to assemble the nickel containing metallocenter of UreC. The UreE protein probably delivers the nickel.

Its subcellular location is the cytoplasm. Functionally, required for maturation of urease via the functional incorporation of the urease nickel metallocenter. This is Urease accessory protein UreD from Actinomyces naeslundii.